The primary structure comprises 3907 residues: A-kinase anchor protein 9 (3907 aa).

Over residues 1–14 (MEDEERQKKLEAGK) the composition is skewed to basic and acidic residues. The disordered stretch occupies residues 1–57 (MEDEERQKKLEAGKAKLAQFRQRKAQSDGQSPSKKQKKKRKTSSSKHDVSAHHDLNI). Basic residues predominate over residues 34–44 (KKQKKKRKTSS). Positions 45–56 (SKHDVSAHHDLN) are enriched in basic and acidic residues. Coiled coils occupy residues 152-902 (DSPT…ELHL), 932-1010 (EVVE…ENVQ), 1088-1173 (QPSE…QTMK), 1241-1268 (ELQD…EEYN), 1324-1380 (KLSS…ESTV), 1422-1447 (VKEE…VAKV), and 1573-1647 (SMDA…DNEN). At serine 153 the chain carries Phosphoserine. Position 1327 is a phosphoserine (serine 1327). A compositionally biased stretch (low complexity) spans 1682 to 1692 (STQTQNGNENQ). Positions 1682-1713 (STQTQNGNENQGEVEEQTFKEKELDRKPEDVP) are disordered. Over residues 1698-1711 (QTFKEKELDRKPED) the composition is skewed to basic and acidic residues. A Phosphoserine modification is found at serine 1765. Coiled-coil stretches lie at residues 1845-2443 (NISS…VEKI), 2532-2549 (ETEM…IVEE), 2591-2764 (QLRE…SKKA), 3061-3088 (LNCL…ADRR), 3120-3466 (ELLE…NLNE), and 3583-3685 (SLTE…NDSL). A PKA-RII subunit binding domain region spans residues 2542–2555 (NLQKIVEEKVAAAL). Residues 3377 to 3405 (RQQMEKDRQVHRKTLQTEQEANTEGQKKM) form a disordered region. Phosphoserine occurs at positions 3690, 3842, 3865, and 3897.

In terms of assembly, interacts with the regulatory region of protein kinase N (PKN), protein phosphatase 2A (PP2A), protein phosphatase 1 (PP1) and the immature non-phosphorylated form of PKC epsilon. Interacts with CIP4 and FNBP1. Interacts with chloride intracellular channel proteins CLIC1, CLIC4 and CLIC5. CSNK1D binding promotes its centrosomal subcellular location. Interacts with GM130/GOLGA2; leading to recruitment to the Golgi apparatus. Interacts with KCNQ1; targets protein kinase A (PKA) catalytic and regulatory subunits and protein phosphatase 1 (PP1), to the heterodimer KCNQ1-KCNE1. Interacts with PDE4DIP isoform 13/MMG8/SMYLE; this interaction stabilizes both proteins. In complex with PDE4DIP isoform 13, recruits CAMSAP2 to the Golgi apparatus. Forms a pericentrosomal complex with CDK5RAP2, EB1/MAPRE1 and PDE4DIP isoform 13; within this complex, MAPRE1 binding to CDK5RAP2 may be mediated by PDE4DIP. Interacts with MAPRE1 and MAPRE3. Interacts (via C-terminus) with CAMSAP2; this interaction is much stronger in the presence of PDE4DIP isoform 13/MMG8/SMYLE. Interacts with CAMSAP3. Interacts (via C-terminus) with the gamma-tubulin ring complex (gamma-TuRC), composed of gamma-tubulin, TUBGCP2, TUBGCP3, TUBGCP4, TUBGCP5 and TUBGCP6. As to expression, widely expressed. Isoform 4: Highly expressed in skeletal muscle and in pancreas.

It is found in the golgi apparatus. The protein localises to the cytoplasm. It localises to the cytoskeleton. Its subcellular location is the microtubule organizing center. The protein resides in the centrosome. Scaffolding protein that assembles several protein kinases and phosphatases on the centrosome and Golgi apparatus. Required to maintain the integrity of the Golgi apparatus. Required for microtubule nucleation at the cis-side of the Golgi apparatus. Required for association of the centrosomes with the poles of the bipolar mitotic spindle during metaphase. In complex with PDE4DIP isoform 13/MMG8/SMYLE, recruits CAMSAP2 to the Golgi apparatus and tethers non-centrosomal minus-end microtubules to the Golgi, an important step for polarized cell movement. In complex with PDE4DIP isoform 13/MMG8/SMYLE, EB1/MAPRE1 and CDK5RAP2, contributes to microtubules nucleation and extension also from the centrosome to the cell periphery. In terms of biological role, associated with the N-methyl-D-aspartate receptor and is specifically found in the neuromuscular junction (NMJ) as well as in neuronal synapses, suggesting a role in the organization of postsynaptic specializations. In Homo sapiens (Human), this protein is A-kinase anchor protein 9 (AKAP9).